A 483-amino-acid chain; its full sequence is Rhamnulokinase (483 aa).

ATP is bound at residue 11–15; that stretch reads ASSGR. Residues Gly-79 and 234–236 contribute to the substrate site; that span reads HDT. Asp-235 (proton acceptor) is an active-site residue. Thr-257 contributes to the ATP binding site. Residue Asn-294 participates in substrate binding. Residue Gln-302 coordinates ATP. Cys-352 and Cys-369 are joined by a disulfide. ATP is bound at residue Gly-401.

It belongs to the rhamnulokinase family. Requires Mg(2+) as cofactor.

The enzyme catalyses L-rhamnulose + ATP = L-rhamnulose 1-phosphate + ADP + H(+). It functions in the pathway carbohydrate degradation; L-rhamnose degradation; glycerone phosphate from L-rhamnose: step 2/3. Functionally, involved in the catabolism of L-rhamnose (6-deoxy-L-mannose). Catalyzes the transfer of the gamma-phosphate group from ATP to the 1-hydroxyl group of L-rhamnulose to yield L-rhamnulose 1-phosphate. This is Rhamnulokinase from Listeria innocua serovar 6a (strain ATCC BAA-680 / CLIP 11262).